The following is a 263-amino-acid chain: Dermonecrotic toxin SpaSicTox-betaIF1 (263 aa).

The Mg(2+) site is built by E15 and D17. H31 serves as the catalytic Nucleophile. Disulfide bonds link C35-C41 and C37-C179. A Mg(2+)-binding site is contributed by D75.

The protein belongs to the arthropod phospholipase D family. Class II subfamily. Requires Mg(2+) as cofactor. Expressed by the venom gland.

It localises to the secreted. The enzyme catalyses an N-(acyl)-sphingosylphosphocholine = an N-(acyl)-sphingosyl-1,3-cyclic phosphate + choline. It carries out the reaction an N-(acyl)-sphingosylphosphoethanolamine = an N-(acyl)-sphingosyl-1,3-cyclic phosphate + ethanolamine. The catalysed reaction is a 1-acyl-sn-glycero-3-phosphocholine = a 1-acyl-sn-glycero-2,3-cyclic phosphate + choline. It catalyses the reaction a 1-acyl-sn-glycero-3-phosphoethanolamine = a 1-acyl-sn-glycero-2,3-cyclic phosphate + ethanolamine. In terms of biological role, dermonecrotic toxins cleave the phosphodiester linkage between the phosphate and headgroup of certain phospholipids (sphingolipid and lysolipid substrates), forming an alcohol (often choline) and a cyclic phosphate. This toxin acts on sphingomyelin (SM). It may also act on ceramide phosphoethanolamine (CPE), lysophosphatidylcholine (LPC) and lysophosphatidylethanolamine (LPE), but not on lysophosphatidylserine (LPS), and lysophosphatidylglycerol (LPG). It acts by transphosphatidylation, releasing exclusively cyclic phosphate products as second products. Induces dermonecrosis, hemolysis, increased vascular permeability, edema, inflammatory response, and platelet aggregation. The polypeptide is Dermonecrotic toxin SpaSicTox-betaIF1 (Sicarius patagonicus (Six-eyed sand spider)).